The chain runs to 96 residues: Glutamyl-tRNA(Gln) amidotransferase subunit C (96 aa).

This sequence belongs to the GatC family. In terms of assembly, heterotrimer of A, B and C subunits.

The enzyme catalyses L-glutamyl-tRNA(Gln) + L-glutamine + ATP + H2O = L-glutaminyl-tRNA(Gln) + L-glutamate + ADP + phosphate + H(+). It catalyses the reaction L-aspartyl-tRNA(Asn) + L-glutamine + ATP + H2O = L-asparaginyl-tRNA(Asn) + L-glutamate + ADP + phosphate + 2 H(+). Allows the formation of correctly charged Asn-tRNA(Asn) or Gln-tRNA(Gln) through the transamidation of misacylated Asp-tRNA(Asn) or Glu-tRNA(Gln) in organisms which lack either or both of asparaginyl-tRNA or glutaminyl-tRNA synthetases. The reaction takes place in the presence of glutamine and ATP through an activated phospho-Asp-tRNA(Asn) or phospho-Glu-tRNA(Gln). The sequence is that of Glutamyl-tRNA(Gln) amidotransferase subunit C from Nostoc sp. (strain PCC 7120 / SAG 25.82 / UTEX 2576).